The primary structure comprises 460 residues: Pentatricopeptide repeat-containing protein At5g43790 (460 aa).

PPR repeat units lie at residues 70–107 (SVFLYNTLISSIVSNHNSTQTHLAFSLYDQILSSRSNF), 111–142 (NEFTYPSLFKASGFDAQWHRHGRALHAHVLKF), 149–179 (DRFVQAALVGFYANCGKLREARSLFERIREP), 180–214 (DLATWNTLLAAYANSEEIDSDEEVLLLFMRMQVRP), 215–249 (NELSLVALIKSCANLGEFVRGVWAHVYVLKNNLTL), 250–280 (NQFVGTSLIDLYSKCGCLSFARKVFDEMSQR), 281–315 (DVSCYNAMIRGLAVHGFGQEGIELYKSLISQGLVP), 316–351 (DSATFVVTISACSHSGLVDEGLQIFNSMKAVYGIEP), and 352–382 (KVEHYGCLVDLLGRSGRLEEAEECIKKMPVK). The interval 387–460 (LWRSFLGSSQ…NKSPGISTLN (74 aa)) is type E motif; degenerate.

The protein belongs to the PPR family. PCMP-E subfamily.

This chain is Pentatricopeptide repeat-containing protein At5g43790 (PCMP-E30), found in Arabidopsis thaliana (Mouse-ear cress).